A 139-amino-acid chain; its full sequence is Large ribosomal subunit protein uL16 (139 aa).

Belongs to the universal ribosomal protein uL16 family. As to quaternary structure, part of the 50S ribosomal subunit.

In terms of biological role, binds 23S rRNA and is also seen to make contacts with the A and possibly P site tRNAs. The protein is Large ribosomal subunit protein uL16 of Chlorobium chlorochromatii (strain CaD3).